The primary structure comprises 461 residues: Argininosuccinate lyase (461 aa).

This sequence belongs to the lyase 1 family. Argininosuccinate lyase subfamily.

The protein localises to the cytoplasm. It carries out the reaction 2-(N(omega)-L-arginino)succinate = fumarate + L-arginine. It participates in amino-acid biosynthesis; L-arginine biosynthesis; L-arginine from L-ornithine and carbamoyl phosphate: step 3/3. The protein is Argininosuccinate lyase of Dehalococcoides mccartyi (strain CBDB1).